Here is a 96-residue protein sequence, read N- to C-terminus: Large ribosomal subunit protein uL18m (96 aa).

Belongs to the universal ribosomal protein uL18 family.

It localises to the mitochondrion. The chain is Large ribosomal subunit protein uL18m (RPL18) from Reclinomonas americana.